A 411-amino-acid chain; its full sequence is Multidrug resistance protein MdtG (411 aa).

10 consecutive transmembrane segments (helical) span residues 14–34 (LFVA…IMPF), 56–76 (LVFS…GGLA), 89–109 (ALGM…WQFL), 113–133 (AVLG…ATQV), 144–164 (TLST…GLLA), 171–191 (PVFY…LLYV), 219–239 (ILSL…IAPI), 254–274 (LAFV…MSAP), 288–308 (ILVF…FVQT), and 376–396 (AVFC…WWCL).

This sequence belongs to the major facilitator superfamily. DHA1 family. MdtG (TC 2.A.1.2.20) subfamily.

It is found in the cell inner membrane. This chain is Multidrug resistance protein MdtG, found in Serratia proteamaculans (strain 568).